Reading from the N-terminus, the 511-residue chain is Potassium voltage-gated channel subfamily A member 10 (511 aa).

Residues 25–44 (EPGYATDFDPTSSKGRPGSS) are disordered. A helical membrane pass occupies residues 218–238 (VAVVSVLVVVISITIFCLETL). The helical transmembrane segment at 271–292 (FFMVESTCIVWFTFELVLRFVV) threads the bilayer. The S-palmitoyl cysteine moiety is linked to residue cysteine 293. The helical transmembrane segment at 303-323 (IMNIIDIISIIPYFATLITEL) threads the bilayer. The helical; Voltage-sensor transmembrane segment at 339–358 (ILRIIRLVRVFRIFKLSRHS) threads the bilayer. A helical membrane pass occupies residues 375–395 (LGLLIFFLFIGVILFSSAVYF). Residues 421-426 (TVGYGD) carry the Selectivity filter motif. The helical transmembrane segment at 436-456 (IVGTLCAIAGVLTIALPVPVI) threads the bilayer. Residues 489-511 (SRMGSTESLNKTNGSCSAEKSRK) form a disordered region.

This sequence belongs to the potassium channel family. A (Shaker) (TC 1.A.1.2) subfamily. Kv1.8/KCNA10 sub-subfamily. Homotetramer. Interacts with KCN4B/POMP. Interaction with KCN4B/POMP is necessary for the modulation of channel activity by cAMP. As to expression, expressed strongly in the inner ear and weakly in skeletal muscle. Not detected in other tissues.

The protein localises to the membrane. The catalysed reaction is K(+)(in) = K(+)(out). The channel activity is up-regulated by cAMP. In terms of biological role, voltage-gated potassium ion channel that mediates K(+) permeability of excitable membranes. When opened in response to the voltage difference across the membrane, KCNA10 channel selectively allows the flow of potassium ions across the membrane down their electrochemical gradient. This chain is Potassium voltage-gated channel subfamily A member 10, found in Mus musculus (Mouse).